The primary structure comprises 648 residues: UDP-galactose:fucoside alpha-3-galactosyltransferase (648 aa).

7 WD repeats span residues 320 to 358 (NHTD…GNDT), 372 to 420 (HKRG…IQTF), 422 to 461 (GHTG…FKRV), 464 to 505 (GHNG…NIIK), 507 to 546 (NQGG…NFND), 556 to 595 (NENS…NNNN), and 617 to 648 (HLNS…SWDL).

The protein belongs to the glycosyltransferase 77 family. Mn(2+) serves as cofactor.

Its subcellular location is the cytoplasm. The enzyme catalyses an alpha-L-fucosyl-(1-&gt;2)-beta-D-galactosyl derivative + UDP-alpha-D-galactose = an alpha-D-galactosyl-(1-&gt;3)-[alpha-L-fucosyl-(1-&gt;2)]-beta-D-galactosyl derivative + UDP + H(+). Its pathway is protein modification; protein glycosylation. Stimulated by dithiothreitol (DTT) in vitro. Totally inhibited by EDTA. Specifically catalyzes the transfer of a galactosyl residue to the hydroxyproline-linked saccharide on Skp1 protein (fpaA/fpaB). Catalyzes the formation of a Gal-alpha-1,3-Fuc linkage, leading to Gal-Fuc-Gal-GlcNAc-HyPro143-Skp1. The chain is UDP-galactose:fucoside alpha-3-galactosyltransferase (agtA) from Dictyostelium discoideum (Social amoeba).